The following is a 199-amino-acid chain: Pyrrolidone-carboxylate peptidase (199 aa).

Active-site residues include Glu-80, Cys-142, and His-166.

It belongs to the peptidase C15 family. Homotetramer.

It is found in the cytoplasm. The catalysed reaction is Release of an N-terminal pyroglutamyl group from a polypeptide, the second amino acid generally not being Pro.. In terms of biological role, removes 5-oxoproline from various penultimate amino acid residues except L-proline. The protein is Pyrrolidone-carboxylate peptidase of Oceanobacillus iheyensis (strain DSM 14371 / CIP 107618 / JCM 11309 / KCTC 3954 / HTE831).